Reading from the N-terminus, the 83-residue chain is Small ribosomal subunit protein bS16 (83 aa).

Belongs to the bacterial ribosomal protein bS16 family.

The protein is Small ribosomal subunit protein bS16 of Pseudomonas putida (strain W619).